Consider the following 402-residue polypeptide: Subtilisin-like protease 9 (402 aa).

Positions 1–20 (MGFFRQLFSLSLCALSLAIP) are cleaved as a signal peptide. The propeptide occupies 21 to 120 (SKLIGLENTQ…VEVDRVVKLD (100 aa)). Positions 36 to 119 (SYIVVMKSTI…YVEVDRVVKL (84 aa)) constitute an Inhibitor I9 domain. Residues 130–402 (SWGLGRISHK…RKLLYNGSGA (273 aa)) enclose the Peptidase S8 domain. Residues Asp162 and His193 each act as charge relay system in the active site. N-linked (GlcNAc...) asparagine glycosylation occurs at Asn254. The active-site Charge relay system is Ser348. Asn390 and Asn398 each carry an N-linked (GlcNAc...) asparagine glycan.

Belongs to the peptidase S8 family.

The protein resides in the secreted. Secreted subtilisin-like serine protease with keratinolytic activity that contributes to pathogenicity. This is Subtilisin-like protease 9 (SUB9) from Arthroderma benhamiae (strain ATCC MYA-4681 / CBS 112371) (Trichophyton mentagrophytes).